A 476-amino-acid polypeptide reads, in one-letter code: Glycogen synthase (476 aa).

Lysine 15 contributes to the ADP-alpha-D-glucose binding site.

Belongs to the glycosyltransferase 1 family. Bacterial/plant glycogen synthase subfamily.

It catalyses the reaction [(1-&gt;4)-alpha-D-glucosyl](n) + ADP-alpha-D-glucose = [(1-&gt;4)-alpha-D-glucosyl](n+1) + ADP + H(+). Its pathway is glycan biosynthesis; glycogen biosynthesis. In terms of biological role, synthesizes alpha-1,4-glucan chains using ADP-glucose. The chain is Glycogen synthase from Lactobacillus acidophilus (strain ATCC 700396 / NCK56 / N2 / NCFM).